We begin with the raw amino-acid sequence, 179 residues long: Putative ADP-ribosylation factor-like protein 5C (179 aa).

The N-myristoyl glycine moiety is linked to residue Gly-2. GTP is bound by residues 23–30 (GLDNEGKT), 66–70 (DIVRP), and 125–128 (NKQD).

It belongs to the small GTPase superfamily. Arf family.

Its function is as follows. Binds and exchanges GTP and GDP. This chain is Putative ADP-ribosylation factor-like protein 5C (ARL5C), found in Homo sapiens (Human).